A 194-amino-acid polypeptide reads, in one-letter code: uncharacterized protein (194 aa).

The region spanning 20–185 (RIFIDTETTG…ADCRMTLGII (166 aa)) is the Exonuclease domain.

This is an uncharacterized protein from Escherichia coli (Bacteriophage 186).